The chain runs to 106 residues: ATP-dependent Clp protease adapter protein ClpS (106 aa).

A compositionally biased stretch (basic and acidic residues) spans 1–13; sequence MPRKTSHEHDHGL. The segment at 1–21 is disordered; the sequence is MPRKTSHEHDHGLVVETSKPE.

The protein belongs to the ClpS family. As to quaternary structure, binds to the N-terminal domain of the chaperone ClpA.

Involved in the modulation of the specificity of the ClpAP-mediated ATP-dependent protein degradation. This chain is ATP-dependent Clp protease adapter protein ClpS, found in Xanthomonas campestris pv. campestris (strain 8004).